Consider the following 419-residue polypeptide: Serine hydroxymethyltransferase (419 aa).

(6S)-5,6,7,8-tetrahydrofolate is bound by residues Leu-121 and 125–127 (GHL). N6-(pyridoxal phosphate)lysine is present on Lys-229.

The protein belongs to the SHMT family. As to quaternary structure, homodimer. The cofactor is pyridoxal 5'-phosphate.

The protein resides in the cytoplasm. The enzyme catalyses (6R)-5,10-methylene-5,6,7,8-tetrahydrofolate + glycine + H2O = (6S)-5,6,7,8-tetrahydrofolate + L-serine. It participates in one-carbon metabolism; tetrahydrofolate interconversion. The protein operates within amino-acid biosynthesis; glycine biosynthesis; glycine from L-serine: step 1/1. Catalyzes the reversible interconversion of serine and glycine with tetrahydrofolate (THF) serving as the one-carbon carrier. This reaction serves as the major source of one-carbon groups required for the biosynthesis of purines, thymidylate, methionine, and other important biomolecules. Also exhibits THF-independent aldolase activity toward beta-hydroxyamino acids, producing glycine and aldehydes, via a retro-aldol mechanism. The sequence is that of Serine hydroxymethyltransferase from Histophilus somni (strain 2336) (Haemophilus somnus).